We begin with the raw amino-acid sequence, 95 residues long: Co-chaperonin GroES (95 aa).

It belongs to the GroES chaperonin family. In terms of assembly, heptamer of 7 subunits arranged in a ring. Interacts with the chaperonin GroEL.

Its subcellular location is the cytoplasm. Functionally, together with the chaperonin GroEL, plays an essential role in assisting protein folding. The GroEL-GroES system forms a nano-cage that allows encapsulation of the non-native substrate proteins and provides a physical environment optimized to promote and accelerate protein folding. GroES binds to the apical surface of the GroEL ring, thereby capping the opening of the GroEL channel. This chain is Co-chaperonin GroES, found in Staphylococcus saprophyticus subsp. saprophyticus (strain ATCC 15305 / DSM 20229 / NCIMB 8711 / NCTC 7292 / S-41).